A 382-amino-acid chain; its full sequence is Mannitol-1-phosphate 5-dehydrogenase (382 aa).

3 to 14 provides a ligand contact to NAD(+); it reads ALHFGAGNIGRG.

It belongs to the mannitol dehydrogenase family.

It carries out the reaction D-mannitol 1-phosphate + NAD(+) = beta-D-fructose 6-phosphate + NADH + H(+). This chain is Mannitol-1-phosphate 5-dehydrogenase, found in Salmonella enteritidis PT4 (strain P125109).